An 843-amino-acid chain; its full sequence is MPLSYPHFRKLLLLDDEAGPLEEELPRLADEGLNRRVAEDLNLQLPNVSIPWTHKVGNFTGLYSSTVPAFNPHWLTPSFPDIHLHQDLISKCEQFVGPLTKNELRRLKLIMPARFFPKLTKYFPLEKGIKPYYPEHAVNHYFKTRHYLHTLWKAGILYKRESTRSASFCGSPYSWEQELQHGSTSLNDKKGHGTESLCAQSTGILSRTSAGSSFQSKFQQSRLGLQQKQGHLANGKQGRSGRLRSRVHTPTRWPVGVEPSGTRCSNNLASRSASCFHQSAVREEANPSLSTSKRHTSTGNAVELNPVPPGLVGSEGKGSVFSCWWLQFRDAEPCSDYCLSHIINLLEDWGPCYEHGQHHIRTPRTPARVTGGVFLVDKNPHNTTESRLVVDFSQFSRGTTRVSWPKFAVPNLQSLTNLLSSNLSWLSLDVSAAFYHLPLHPAAMPHLLVGSSGLSRYVARLSSNSRIYDHQHGTMQNLHNSCSRNLYVSLLLLFQTLGRKLHLYSHPIILGFRKIPMGVGLSPFLLAQFTSAICSVVRRAFPHCLAFSYMDDLVLGAKSVQHLESLYTAVTNFLLSVGIHLNTSKTKRWGYNLHFMGYVIGSWGALPQDHIVHKIKECFRKLPVNRPIDWKVCQRIVGLLGFAAPFTQCGYPALMPLYTCITAKQAFVFSPTYKAFLCKQYMNLYPVARQRPGLCQVFADATPTGWGLAIGHQRMRGTFVAPLPIHTAELLAACFARSRSGANIIGTDNSVVLSRKYTSFPWLLGCAANWILRGTSFVYVPSALNPADDPSRGRLGLYRPLLRLPFQPTTGRTSLYADSPSVPSHLPVRVHFASPLHVAWRPP.

The segment at 1-177 (MPLSYPHFRK…FCGSPYSWEQ (177 aa)) is terminal protein domain (TP). The tract at residues 178 to 346 (ELQHGSTSLN…YCLSHIINLL (169 aa)) is spacer. The interval 284-308 (EANPSLSTSKRHTSTGNAVELNPVP) is disordered. Residues 347-690 (EDWGPCYEHG…YMNLYPVARQ (344 aa)) are polymerase/reverse transcriptase domain (RT). The region spanning 357 to 600 (QHHIRTPRTP…YNLHFMGYVI (244 aa)) is the Reverse transcriptase domain. Mg(2+) contacts are provided by aspartate 429, aspartate 551, and aspartate 552.

The protein belongs to the hepadnaviridae P protein family.

The enzyme catalyses DNA(n) + a 2'-deoxyribonucleoside 5'-triphosphate = DNA(n+1) + diphosphate. It carries out the reaction Endonucleolytic cleavage to 5'-phosphomonoester.. Activated by host HSP70 and HSP40 in vitro to be able to bind the epsilon loop of the pgRNA. Because deletion of the RNase H region renders the protein partly chaperone-independent, the chaperones may be needed indirectly to relieve occlusion of the RNA-binding site by this domain. Inhibited by several reverse-transcriptase inhibitors: Lamivudine, Adefovir and Entecavir. Its function is as follows. Multifunctional enzyme that converts the viral RNA genome into dsDNA in viral cytoplasmic capsids. This enzyme displays a DNA polymerase activity that can copy either DNA or RNA templates, and a ribonuclease H (RNase H) activity that cleaves the RNA strand of RNA-DNA heteroduplexes in a partially processive 3'- to 5'-endonucleasic mode. Neo-synthesized pregenomic RNA (pgRNA) are encapsidated together with the P protein, and reverse-transcribed inside the nucleocapsid. Initiation of reverse-transcription occurs first by binding the epsilon loop on the pgRNA genome, and is initiated by protein priming, thereby the 5'-end of (-)DNA is covalently linked to P protein. Partial (+)DNA is synthesized from the (-)DNA template and generates the relaxed circular DNA (RC-DNA) genome. After budding and infection, the RC-DNA migrates in the nucleus, and is converted into a plasmid-like covalently closed circular DNA (cccDNA). The activity of P protein does not seem to be necessary for cccDNA generation, and is presumably released from (+)DNA by host nuclear DNA repair machinery. The protein is Protein P of Homo sapiens (Human).